Reading from the N-terminus, the 1101-residue chain is Lysylphosphatidylglycerol biosynthesis bifunctional protein LysX (1101 aa).

Residues 1–601 are phosphatidylglycerol lysyltransferase; that stretch reads MTATRLVRAH…RLHSDGTAPD (601 aa). The next 7 helical transmembrane spans lie at 18–38, 60–80, 84–104, 113–133, 151–171, 183–200, and 207–227; these read VPAAAGWIVGVIATLSLLASV, FPDTSFAWAFVLALLAAALAA, IAWWILTGYMVAAAVWNVTGL, DVGEIIGLGFHLAAIASLLLA, VTLVAGLGVGTLIGWGLLELF, YALNRVGAFAGADAGAFS, and VNALLGLFGAMALMIAAVVLF. The tract at residues 602 to 1101 is lysine--tRNA ligase; it reads RIGPVGDGAD…TLPFPLAKPR (500 aa). The OB DNA-binding region spans 662-740; sequence VTVSGRVLRA…SVLVTRWRLI (79 aa). Mg(2+) contacts are provided by D1013 and E1020.

It in the N-terminal section; belongs to the LPG synthetase family. In the C-terminal section; belongs to the class-II aminoacyl-tRNA synthetase family. Requires Mg(2+) as cofactor.

The protein localises to the cell membrane. The catalysed reaction is tRNA(Lys) + L-lysine + ATP = L-lysyl-tRNA(Lys) + AMP + diphosphate. It carries out the reaction L-lysyl-tRNA(Lys) + a 1,2-diacyl-sn-glycero-3-phospho-(1'-sn-glycerol) = a 1,2-diacyl-sn-glycero-3-phospho-1'-(3'-O-L-lysyl)-sn-glycerol + tRNA(Lys). Catalyzes the production of L-lysyl-tRNA(Lys)transfer and the transfer of a lysyl group from L-lysyl-tRNA(Lys) to membrane-bound phosphatidylglycerol (PG), which produces lysylphosphatidylglycerol (LPG), one of the components of the bacterial membrane with a positive net charge. LPG synthesis contributes to the resistance to cationic antimicrobial peptides (CAMPs) and likely protects M.tuberculosis against the CAMPs produced by competiting microorganisms (bacteriocins). In fact, the modification of anionic phosphatidylglycerol with positively charged L-lysine results in repulsion of the peptides. The protein is Lysylphosphatidylglycerol biosynthesis bifunctional protein LysX (lysX) of Mycolicibacterium gilvum (strain PYR-GCK) (Mycobacterium gilvum (strain PYR-GCK)).